Reading from the N-terminus, the 260-residue chain is Mitochondrial import inner membrane translocase subunit Tim29 (260 aa).

Residues 1-31 (MAAAALRRFWSRRRAEAGDAVVAKPGVWARL) constitute a mitochondrion transit peptide. Topologically, residues 32–59 (GSWARALLRDYAEACRDASAEARARPGR) are mitochondrial matrix. Residues 60-77 (AAVYVGLLGGAAACFTLA) form a helical membrane-spanning segment. Topologically, residues 78-260 (PSEGAFEEAL…HSLVQAEAPR (183 aa)) are mitochondrial intermembrane.

In terms of assembly, component of the TIM22 complex, which core is composed of TIMM22, associated with TIMM10 (TIMM10A and/or TIMM10B), TIMM9, AGK and TIMM29. Interacts with TIMM10B; the interaction is direct. Interacts with TOMM40; linking the TIM22 complex to the TOM complex. Interacts with TIMM22 (when oxidized); the interaction is direct.

The protein resides in the mitochondrion inner membrane. Its function is as follows. Component of the TIM22 complex, a complex that mediates the import and insertion of multi-pass transmembrane proteins into the mitochondrial inner membrane. The TIM22 complex forms a twin-pore translocase that uses the membrane potential as the external driving force. Required for the stability of the TIM22 complex and functions in the assembly of the TIMM22 protein into the TIM22 complex. May facilitate cooperation between TIM22 and TOM complexes by interacting with TOMM40. This chain is Mitochondrial import inner membrane translocase subunit Tim29, found in Homo sapiens (Human).